The chain runs to 290 residues: 4-hydroxybenzoate octaprenyltransferase (290 aa).

The next 6 membrane-spanning stretches (helical) occupy residues 41–61 (WPLLAIFALGTLLMRSAGCAM), 89–109 (WEAVAIAVVLAFISFLLIQPL), 133–153 (FFAIPQAYLGIAFGFGIPMAF), 158–178 (DTVPMLAWVMLIANIFWSVAY), 202–224 (FGRFDVAAVMLCYAATLGIYVWI), and 269–289 (WLGGVLFAGIAAHYLLAGTAG).

It belongs to the UbiA prenyltransferase family. Mg(2+) is required as a cofactor.

The protein localises to the cell inner membrane. The enzyme catalyses all-trans-octaprenyl diphosphate + 4-hydroxybenzoate = 4-hydroxy-3-(all-trans-octaprenyl)benzoate + diphosphate. It functions in the pathway cofactor biosynthesis; ubiquinone biosynthesis. In terms of biological role, catalyzes the prenylation of para-hydroxybenzoate (PHB) with an all-trans polyprenyl group. Mediates the second step in the final reaction sequence of ubiquinone-8 (UQ-8) biosynthesis, which is the condensation of the polyisoprenoid side chain with PHB, generating the first membrane-bound Q intermediate 3-octaprenyl-4-hydroxybenzoate. The chain is 4-hydroxybenzoate octaprenyltransferase from Burkholderia ambifaria (strain MC40-6).